The following is a 198-amino-acid chain: Ribosome maturation factor RimM (198 aa).

The disordered stretch occupies residues M1 to D21. The PRC barrel domain maps to D122 to L195.

The protein belongs to the RimM family. In terms of assembly, binds ribosomal protein uS19.

It localises to the cytoplasm. Its function is as follows. An accessory protein needed during the final step in the assembly of 30S ribosomal subunit, possibly for assembly of the head region. Essential for efficient processing of 16S rRNA. May be needed both before and after RbfA during the maturation of 16S rRNA. It has affinity for free ribosomal 30S subunits but not for 70S ribosomes. The sequence is that of Ribosome maturation factor RimM from Salinibacter ruber (strain DSM 13855 / M31).